A 133-amino-acid polypeptide reads, in one-letter code: uncharacterized protein (133 aa).

Residues 91-113 (LFATALISCIPSSFSALSFLATL) form a helical membrane-spanning segment.

The protein localises to the membrane. This is an uncharacterized protein from Saccharomyces cerevisiae (strain ATCC 204508 / S288c) (Baker's yeast).